Consider the following 201-residue polypeptide: Superoxide dismutase [Mn/Fe] (201 aa).

Fe(3+) is bound by residues His27, His81, Asp162, and His166. Mn(2+) contacts are provided by His27, His81, Asp162, and His166.

The protein belongs to the iron/manganese superoxide dismutase family. Homodimer. Requires Mn(2+) as cofactor. It depends on Fe(3+) as a cofactor.

The catalysed reaction is 2 superoxide + 2 H(+) = H2O2 + O2. Functionally, destroys superoxide anion radicals which are normally produced within the cells and which are toxic to biological systems. Catalyzes the dismutation of superoxide anion radicals into O2 and H2O2 by successive reduction and oxidation of the transition metal ion at the active site. The sequence is that of Superoxide dismutase [Mn/Fe] (sodA) from Staphylococcus carnosus.